The following is a 320-amino-acid chain: Cytochrome f (320 aa).

The signal sequence occupies residues 1-35 (MQTRNTFSSIKEEITRSISVSLMIYIITWAPVSNA). The heme site is built by tyrosine 36, cysteine 56, cysteine 59, and histidine 60. The helical transmembrane segment at 286–306 (VQGLLFFFASVILAQIFLVLK) threads the bilayer.

This sequence belongs to the cytochrome f family. In terms of assembly, the 4 large subunits of the cytochrome b6-f complex are cytochrome b6, subunit IV (17 kDa polypeptide, petD), cytochrome f and the Rieske protein, while the 4 small subunits are PetG, PetL, PetM and PetN. The complex functions as a dimer. Heme serves as cofactor.

The protein localises to the plastid. The protein resides in the chloroplast thylakoid membrane. Functionally, component of the cytochrome b6-f complex, which mediates electron transfer between photosystem II (PSII) and photosystem I (PSI), cyclic electron flow around PSI, and state transitions. The protein is Cytochrome f of Cucumis sativus (Cucumber).